The following is a 210-amino-acid chain: Large ribosomal subunit protein bL25 (210 aa).

Residues 185 to 210 (APEPAGQPEVPPEPAEEAKAKTIEKE) form a disordered region. Residues 200 to 210 (EEAKAKTIEKE) show a composition bias toward basic and acidic residues.

This sequence belongs to the bacterial ribosomal protein bL25 family. CTC subfamily. As to quaternary structure, part of the 50S ribosomal subunit; part of the 5S rRNA/L5/L18/L25 subcomplex. Contacts the 5S rRNA. Binds to the 5S rRNA independently of L5 and L18.

Functionally, this is one of the proteins that binds to the 5S RNA in the ribosome where it forms part of the central protuberance. This chain is Large ribosomal subunit protein bL25, found in Desulforamulus reducens (strain ATCC BAA-1160 / DSM 100696 / MI-1) (Desulfotomaculum reducens).